The sequence spans 542 residues: NAD-dependent deacetylase sir2D (542 aa).

Disordered stretches follow at residues 1–37 (MNKRSLENNELNEIQNNQNKNNNNKINKEIPSDNTPL) and 136–160 (ETSTSITNTSSTTTTSTSTTTTTTT). Positions 8–25 (NNELNEIQNNQNKNNNNK) are enriched in low complexity. Positions 165-193 (NETILLDILNNNKDEVDDEIQRIGNNVGN) form a coiled coil. The Deacetylase sirtuin-type domain occupies 283 to 542 (ATLDLSTFEK…VQDLLNKVKW (260 aa)). The Proton acceptor role is filled by histidine 411. Zn(2+) contacts are provided by cysteine 419, cysteine 422, cysteine 443, and cysteine 446.

It belongs to the sirtuin family. It depends on Zn(2+) as a cofactor.

It carries out the reaction N(6)-acetyl-L-lysyl-[protein] + NAD(+) + H2O = 2''-O-acetyl-ADP-D-ribose + nicotinamide + L-lysyl-[protein]. Its function is as follows. NAD-dependent deacetylase, which plays an important role in the regulation of transcriptional repression. The protein is NAD-dependent deacetylase sir2D (sir2D) of Dictyostelium discoideum (Social amoeba).